A 738-amino-acid chain; its full sequence is Glycogen [starch] synthase, muscle (738 aa).

At serine 8 the chain carries Phosphoserine; by AMPK and PKA. Phosphoserine is present on serine 11. UDP is bound at residue lysine 39. Residues histidine 205 and arginine 211 each coordinate UDP-alpha-D-glucose. Histidine 291, glutamate 292, glutamine 294, histidine 297, and lysine 301 together coordinate alpha-D-glucose 6-phosphate. A UDP-binding site is contributed by arginine 331. Arginine 331 lines the UDP-alpha-D-glucose pocket. The residue at position 412 (serine 412) is a Phosphoserine. Histidine 501 is an alpha-D-glucose 6-phosphate binding site. UDP-alpha-D-glucose contacts are provided by glutamate 510, tryptophan 512, and glycine 513. A UDP-binding site is contributed by threonine 515. 2 residues coordinate alpha-D-glucose 6-phosphate: arginine 582 and arginine 586. Residues 632 to 738 (QGYRYPRPAS…PTSSLGEERN (107 aa)) are disordered. Serine 641 is subject to Phosphoserine; by DYRK2, GSK3-alpha, GSK3-beta and PASK. Phosphoserine occurs at positions 645, 649, 652, 653, 657, and 672. A compositionally biased stretch (acidic residues) spans 658–681 (EDEEEPRDGPLGEDSERYDEEEEA). The segment covering 682–695 (AKDRRNIRAPEWPR) has biased composition (basic and acidic residues). 3 positions are modified to phosphoserine: serine 698, serine 709, and serine 711. Residues 698-738 (SCSSSTGGSKRSNSVDTGPSSSLSTPTEPLSPTSSLGEERN) show a composition bias toward low complexity. Threonine 722 and threonine 724 each carry phosphothreonine. Serine 728 and serine 732 each carry phosphoserine.

Belongs to the glycosyltransferase 3 family. As to quaternary structure, part of the GYS1-GYG1 complex, a heterooctamer composed of a tetramer of GYS1 and 2 dimers of GYG1, where each GYS1 protomer binds to one GYG1 subunit (via GYG1 C-terminus); the GYS1 tetramer may dissociate from GYG1 dimers to continue glycogen polymerization on its own. Post-translationally, primed phosphorylation at Ser-657 (site 5) by CSNK2A1 and CSNK2A2 is required for inhibitory phosphorylation at Ser-641 (site 3a), Ser-645 (site 3b), Ser-649 (site 3c) and Ser-653 (site 4) by GSK3A an GSK3B. Phosphorylated at Ser-641 by PASK, leading to inactivation; phosphorylation by PASK is inhibited by glycogen. Phosphorylated at Ser-641 by DYRK2, leading to inactivation. Dephosphorylation at Ser-641 and Ser-645 by PP1 activates the enzyme. Phosphorylation at Ser-8 by AMPK inactivates the enzyme activity.

It carries out the reaction [(1-&gt;4)-alpha-D-glucosyl](n) + UDP-alpha-D-glucose = [(1-&gt;4)-alpha-D-glucosyl](n+1) + UDP + H(+). It functions in the pathway glycan biosynthesis; glycogen biosynthesis. With respect to regulation, allosteric activation by glucose-6-phosphate. Phosphorylation reduces the activity towards UDP-glucose. When in the non-phosphorylated state, glycogen synthase does not require glucose-6-phosphate as an allosteric activator; when phosphorylated it does. Functionally, glycogen synthase participates in the glycogen biosynthetic process along with glycogenin and glycogen branching enzyme. Extends the primer composed of a few glucose units formed by glycogenin by adding new glucose units to it. In this context, glycogen synthase transfers the glycosyl residue from UDP-Glc to the non-reducing end of alpha-1,4-glucan. This is Glycogen [starch] synthase, muscle (Gys1) from Mus musculus (Mouse).